The primary structure comprises 332 residues: Glycerol-3-phosphate dehydrogenase [NAD(P)+] (332 aa).

The NADPH site is built by serine 10, tryptophan 11, histidine 31, arginine 32, and lysine 105. Sn-glycerol 3-phosphate contacts are provided by lysine 105, glycine 136, and serine 138. Alanine 140 contributes to the NADPH binding site. Sn-glycerol 3-phosphate-binding residues include lysine 191, aspartate 244, serine 254, arginine 255, and asparagine 256. The active-site Proton acceptor is the lysine 191. Arginine 255 provides a ligand contact to NADPH. Residues valine 279 and glutamate 281 each contribute to the NADPH site.

This sequence belongs to the NAD-dependent glycerol-3-phosphate dehydrogenase family.

It localises to the cytoplasm. The enzyme catalyses sn-glycerol 3-phosphate + NAD(+) = dihydroxyacetone phosphate + NADH + H(+). It carries out the reaction sn-glycerol 3-phosphate + NADP(+) = dihydroxyacetone phosphate + NADPH + H(+). Its pathway is membrane lipid metabolism; glycerophospholipid metabolism. Its function is as follows. Catalyzes the reduction of the glycolytic intermediate dihydroxyacetone phosphate (DHAP) to sn-glycerol 3-phosphate (G3P), the key precursor for phospholipid synthesis. This Prosthecochloris aestuarii (strain DSM 271 / SK 413) protein is Glycerol-3-phosphate dehydrogenase [NAD(P)+].